A 350-amino-acid polypeptide reads, in one-letter code: Protein-glutamate methylesterase/protein-glutamine glutaminase (350 aa).

Residues 5-122 form the Response regulatory domain; that stretch reads RVLCVDDSAL…REGMLAYSEL (118 aa). Residue D56 is modified to 4-aspartylphosphate. Residues 153 to 345 enclose the CheB-type methylesterase domain; sequence LLSSEKLIAI…QRMLAQISAG (193 aa). Active-site residues include S165, H191, and D287.

The protein belongs to the CheB family. Phosphorylated by CheA. Phosphorylation of the N-terminal regulatory domain activates the methylesterase activity.

It is found in the cytoplasm. The enzyme catalyses [protein]-L-glutamate 5-O-methyl ester + H2O = L-glutamyl-[protein] + methanol + H(+). It carries out the reaction L-glutaminyl-[protein] + H2O = L-glutamyl-[protein] + NH4(+). Its function is as follows. Involved in chemotaxis. Part of a chemotaxis signal transduction system that modulates chemotaxis in response to various stimuli. Catalyzes the demethylation of specific methylglutamate residues introduced into the chemoreceptors (methyl-accepting chemotaxis proteins or MCP) by CheR. Also mediates the irreversible deamidation of specific glutamine residues to glutamic acid. Does not interact with the C-terminal pentapeptide of the chemoreceptors. This Pectobacterium atrosepticum (strain SCRI 1043 / ATCC BAA-672) (Erwinia carotovora subsp. atroseptica) protein is Protein-glutamate methylesterase/protein-glutamine glutaminase.